The following is a 558-amino-acid chain: Xylulose kinase 2 (558 aa).

Substrate contacts are provided by residues aspartate 16, 20 to 23, serine 111, and aspartate 283; that span reads QSMK. Residues threonine 305 and 456–460 each bind ATP; that span reads GASAN.

This sequence belongs to the FGGY kinase family. A divalent metal cation serves as cofactor.

Its subcellular location is the cytoplasm. It carries out the reaction D-xylulose + ATP = D-xylulose 5-phosphate + ADP + H(+). The protein operates within isoprenoid biosynthesis; carotenoid biosynthesis. With respect to regulation, repressed by oxo-clomazone (keto-clomazone), a bleaching herbicide. In terms of biological role, mediates 1-deoxy-D-xylulose (DX) phosphorylation in the cytoplasm prior to the translocation of 1-deoxy-D-xylulose 5-phosphate into plastids. Can also phosphorylate D-xylulose (Xyl). Uses preferentially ATP as cosubstrate. This is Xylulose kinase 2 from Arabidopsis thaliana (Mouse-ear cress).